A 331-amino-acid polypeptide reads, in one-letter code: DNA-directed RNA polymerase subunit alpha (331 aa).

Residues 1 to 226 (MLIAQRPTLT…ELFGLCRELN (226 aa)) form an alpha N-terminal domain (alpha-NTD) region. The tract at residues 243 to 331 (TNPEMAVPIE…GGTFFSPEDE (89 aa)) is alpha C-terminal domain (alpha-CTD).

It belongs to the RNA polymerase alpha chain family. As to quaternary structure, homodimer. The RNAP catalytic core consists of 2 alpha, 1 beta, 1 beta' and 1 omega subunit. When a sigma factor is associated with the core the holoenzyme is formed, which can initiate transcription.

The enzyme catalyses RNA(n) + a ribonucleoside 5'-triphosphate = RNA(n+1) + diphosphate. Functionally, DNA-dependent RNA polymerase catalyzes the transcription of DNA into RNA using the four ribonucleoside triphosphates as substrates. This Bifidobacterium longum (strain NCC 2705) protein is DNA-directed RNA polymerase subunit alpha.